A 95-amino-acid polypeptide reads, in one-letter code: Aspartyl/glutamyl-tRNA(Asn/Gln) amidotransferase subunit C (95 aa).

Belongs to the GatC family. Heterotrimer of A, B and C subunits.

It catalyses the reaction L-glutamyl-tRNA(Gln) + L-glutamine + ATP + H2O = L-glutaminyl-tRNA(Gln) + L-glutamate + ADP + phosphate + H(+). The enzyme catalyses L-aspartyl-tRNA(Asn) + L-glutamine + ATP + H2O = L-asparaginyl-tRNA(Asn) + L-glutamate + ADP + phosphate + 2 H(+). Allows the formation of correctly charged Asn-tRNA(Asn) or Gln-tRNA(Gln) through the transamidation of misacylated Asp-tRNA(Asn) or Glu-tRNA(Gln) in organisms which lack either or both of asparaginyl-tRNA or glutaminyl-tRNA synthetases. The reaction takes place in the presence of glutamine and ATP through an activated phospho-Asp-tRNA(Asn) or phospho-Glu-tRNA(Gln). The polypeptide is Aspartyl/glutamyl-tRNA(Asn/Gln) amidotransferase subunit C (Bartonella henselae (strain ATCC 49882 / DSM 28221 / CCUG 30454 / Houston 1) (Rochalimaea henselae)).